The chain runs to 152 residues: Gamma-glutamylaminecyclotransferase C (152 aa).

9-12 serves as a coordination point for substrate; that stretch reads YGSL. E84 serves as the catalytic Proton acceptor.

The protein belongs to the gamma-glutamylcyclotransferase family.

The catalysed reaction is epsilon-(gamma-L-glutamyl)-L-lysine = 5-oxo-L-proline + L-lysine. Its function is as follows. May contribute to degradation of proteins cross-linked by transglutaminases by degrading the cross-link between a lysine and a glutamic acid residue. Catalyzes the formation of 5-oxo-L-proline from L-gamma-glutamyl-L-epsilon-lysine. The chain is Gamma-glutamylaminecyclotransferase C (ggact.3) from Danio rerio (Zebrafish).